A 182-amino-acid polypeptide reads, in one-letter code: Transmembrane and coiled-coil domain-containing protein 2 (182 aa).

Residues 51-71 traverse the membrane as a helical segment; the sequence is VQIILRISFLILLGIGIYALW. The stretch at 124-151 forms a coiled coil; sequence GLQEKILKKLKTVENKMKNLEGIIVAQK.

The protein localises to the membrane. In Homo sapiens (Human), this protein is Transmembrane and coiled-coil domain-containing protein 2 (TMCO2).